Consider the following 400-residue polypeptide: MIPLLSLFYIVAVKVFKKTAPNGKITVYLGKRDFGDHGSYCEPVEGVLLVDNEYLKGRKVFGQVTTTFRYGREEDEVMGLHFSRQLYLALEQVLPTKKNEAPSDFQNRLVRKLGTLAHPFTFALPENAPPSVTLQPGSEDQGRPLGVEYELKLFIAETEDEKPHKRNSVSMAIRKLQYAKPSPLAKQPSALVSKGFMMSSGKLQLEVTLDKELYFHGDKVSANVTISNYSKKTVKNIKVAVVQNTEVTMVNGHFHKTISSIESKEGCPITPGATLSKVYTLLPLASQNKDKRGIALDGMLKEGDTNLASSTLNSTGDAIGIVISYVIRVRLYMGAIGGELVADVSFKLANPEPVPVVPGSQESKAQQEKARMKKQLSREMSTDLIVEDFARRRQFSEDNE.

This sequence belongs to the arrestin family. In terms of processing, phosphorylated.

Its function is as follows. Plays an important role in the photoreceptor transduction. The sequence is that of Arrestin, lateral eye from Limulus polyphemus (Atlantic horseshoe crab).